Reading from the N-terminus, the 124-residue chain is Tax1-binding protein 3 (124 aa).

N-acetylserine is present on S2. One can recognise a PDZ domain in the interval 15-112; it reads RVEIHKLRQG…EVVRLLVTRQ (98 aa). S61 is subject to Phosphoserine.

As to quaternary structure, interacts (via its PDZ domain) with GLS2. Interacts (via its PDZ domain) with RTKN (via the C-terminal region); this interaction facilitates Rho-mediated activation of the FOS serum response element (SRE). Interacts (via its PDZ domain) with CTNNB1; this interaction inhibits the transcriptional activity of CTNNB1. Interacts with HTLV-1 TAX protein. Interacts (via PDZ domain) with ARHGEF16. Interacts (via PDZ domain) with KCNJ4 (via C-terminus). Competes with LIN7A for KCNJ4 binding. Interacts with ADGRB2. Ubiquitous. Detected in brain, heart, kidney, lung, small intestine and skeletal muscle. Detected in various cell lines including HeLa. Weakly expressed in peripheral blood leukocytes.

It is found in the cytoplasm. It localises to the nucleus. The protein resides in the cell membrane. May regulate a number of protein-protein interactions by competing for PDZ domain binding sites. Binds CTNNB1 and may thereby act as an inhibitor of the Wnt signaling pathway. Competes with LIN7A for KCNJ4 binding, and thereby promotes KCNJ4 internalization. May play a role in the Rho signaling pathway. May play a role in activation of CDC42 by the viral protein HPV16 E6. This is Tax1-binding protein 3 from Homo sapiens (Human).